Here is a 259-residue protein sequence, read N- to C-terminus: Thiazole synthase (259 aa).

K98 functions as the Schiff-base intermediate with DXP in the catalytic mechanism. Residues G159, 185–186 (AG), and 207–208 (NS) each bind 1-deoxy-D-xylulose 5-phosphate.

The protein belongs to the ThiG family. In terms of assembly, homotetramer. Forms heterodimers with either ThiH or ThiS.

The protein resides in the cytoplasm. It catalyses the reaction [ThiS sulfur-carrier protein]-C-terminal-Gly-aminoethanethioate + 2-iminoacetate + 1-deoxy-D-xylulose 5-phosphate = [ThiS sulfur-carrier protein]-C-terminal Gly-Gly + 2-[(2R,5Z)-2-carboxy-4-methylthiazol-5(2H)-ylidene]ethyl phosphate + 2 H2O + H(+). The protein operates within cofactor biosynthesis; thiamine diphosphate biosynthesis. Functionally, catalyzes the rearrangement of 1-deoxy-D-xylulose 5-phosphate (DXP) to produce the thiazole phosphate moiety of thiamine. Sulfur is provided by the thiocarboxylate moiety of the carrier protein ThiS. In vitro, sulfur can be provided by H(2)S. In Chlorobium phaeovibrioides (strain DSM 265 / 1930) (Prosthecochloris vibrioformis (strain DSM 265)), this protein is Thiazole synthase.